Consider the following 301-residue polypeptide: MTKKADPYGFAKDFLAGGISAAVSKTAVAPIERVKLLLQVQAASKQIAVDKQYKGIVDCFVRIPKEQGIGAFWRGNLANVIRYFPTQALNFAFKDVYKQVFLGGVDKNTQFWRYFLGNLGSGGAAGATSLCFVYPLDFARTRLGADVGRGAGEREFNGLLDCLKKTVKSDGIIGLYRGFNVSVQGIIIYRAAYFGCFDTAKGMLPDPKNTSIFVSWAIAQVVTTASGIISYPFDTVRRRMMMQSGRAKSEVMYKNTLDCWVKIGKQEGSGAFFKGAFSNVLRGTGGALVLVFYDEVKALLG.

Solcar repeat units follow at residues Tyr-8–Val-100, Arg-113–Met-203, and Thr-210–Leu-299. The next 5 helical transmembrane spans lie at Phe-10–Gln-39, Leu-77–Phe-101, Trp-112–Phe-132, Val-181–Lys-201, and Phe-213–Phe-233. The ADP site is built by Arg-82 and Lys-94. Arg-237 is an ADP binding site. The important for transport activity stretch occupies residues Arg-237–Met-242. Positions Arg-237–Met-242 match the Nucleotide carrier signature motif motif. The helical transmembrane segment at Ala-276–Tyr-293 threads the bilayer.

This sequence belongs to the mitochondrial carrier (TC 2.A.29) family. Monomer.

It localises to the mitochondrion inner membrane. It carries out the reaction ADP(in) + ATP(out) = ADP(out) + ATP(in). Its activity is regulated as follows. The matrix-open state (m-state) is inhibited by the membrane-permeable bongkrekic acid (BKA). The cytoplasmic-open state (c-state) is inhibited by the membrane-impermeable toxic inhibitor carboxyatractyloside (CATR). Its function is as follows. ADP:ATP antiporter that mediates import of ADP into the mitochondrial matrix for ATP synthesis, and export of ATP out to fuel the cell. Cycles between the cytoplasmic-open state (c-state) and the matrix-open state (m-state): operates by the alternating access mechanism with a single substrate-binding site intermittently exposed to either the cytosolic (c-state) or matrix (m-state) side of the inner mitochondrial membrane. This chain is ADP,ATP carrier protein 1, found in Anopheles gambiae (African malaria mosquito).